The chain runs to 396 residues: Succinyl-diaminopimelate desuccinylase (396 aa).

His-74 contacts Zn(2+). The active site involves Asp-76. Asp-107 contributes to the Zn(2+) binding site. Catalysis depends on Glu-142, which acts as the Proton acceptor. Glu-143, Glu-171, and His-360 together coordinate Zn(2+).

It belongs to the peptidase M20A family. DapE subfamily. In terms of assembly, homodimer. Zn(2+) is required as a cofactor. Requires Co(2+) as cofactor.

The enzyme catalyses N-succinyl-(2S,6S)-2,6-diaminopimelate + H2O = (2S,6S)-2,6-diaminopimelate + succinate. It functions in the pathway amino-acid biosynthesis; L-lysine biosynthesis via DAP pathway; LL-2,6-diaminopimelate from (S)-tetrahydrodipicolinate (succinylase route): step 3/3. Its function is as follows. Catalyzes the hydrolysis of N-succinyl-L,L-diaminopimelic acid (SDAP), forming succinate and LL-2,6-diaminopimelate (DAP), an intermediate involved in the bacterial biosynthesis of lysine and meso-diaminopimelic acid, an essential component of bacterial cell walls. This Methylobacterium nodulans (strain LMG 21967 / CNCM I-2342 / ORS 2060) protein is Succinyl-diaminopimelate desuccinylase.